A 177-amino-acid chain; its full sequence is Inorganic pyrophosphatase (177 aa).

Lys-29, Arg-43, and Tyr-55 together coordinate substrate. Mg(2+) is bound by residues Asp-65, Asp-70, and Asp-102. Tyr-141 serves as a coordination point for substrate.

This sequence belongs to the PPase family. In terms of assembly, homohexamer. It depends on Mg(2+) as a cofactor.

It localises to the cytoplasm. The catalysed reaction is diphosphate + H2O = 2 phosphate + H(+). Functionally, catalyzes the hydrolysis of inorganic pyrophosphate (PPi) forming two phosphate ions. In Aquifex pyrophilus, this protein is Inorganic pyrophosphatase.